The following is a 426-amino-acid chain: Glutamyl-tRNA reductase (426 aa).

Residues 52–55 (TCNR), Ser110, 115–117 (EYE), and Gln121 each bind substrate. The Nucleophile role is filled by Cys53. 190 to 195 (GAGEMG) is a binding site for NADP(+).

It belongs to the glutamyl-tRNA reductase family. In terms of assembly, homodimer.

The catalysed reaction is (S)-4-amino-5-oxopentanoate + tRNA(Glu) + NADP(+) = L-glutamyl-tRNA(Glu) + NADPH + H(+). It participates in porphyrin-containing compound metabolism; protoporphyrin-IX biosynthesis; 5-aminolevulinate from L-glutamyl-tRNA(Glu): step 1/2. Functionally, catalyzes the NADPH-dependent reduction of glutamyl-tRNA(Glu) to glutamate 1-semialdehyde (GSA). The polypeptide is Glutamyl-tRNA reductase (Saccharolobus islandicus (strain Y.N.15.51 / Yellowstone #2) (Sulfolobus islandicus)).